Consider the following 212-residue polypeptide: Large ribosomal subunit protein uL3 (212 aa).

The residue at position 153 (Gln153) is an N5-methylglutamine.

This sequence belongs to the universal ribosomal protein uL3 family. Part of the 50S ribosomal subunit. Forms a cluster with proteins L14 and L19. Post-translationally, methylated by PrmB.

In terms of biological role, one of the primary rRNA binding proteins, it binds directly near the 3'-end of the 23S rRNA, where it nucleates assembly of the 50S subunit. This is Large ribosomal subunit protein uL3 from Acinetobacter baylyi (strain ATCC 33305 / BD413 / ADP1).